The following is a 406-amino-acid chain: Bifunctional enzyme Fae/Hps (406 aa).

Residues 1 to 164 (MSDIYEIGEA…AEKDRGTHPI (164 aa)) form a formaldehyde-activating enzyme region. Residue His-20 is the Proton donor of the active site. Residues Asp-22, Leu-51, Lys-69, Thr-71, and Gln-86 each coordinate substrate. The interval 165–406 (MGFKAMKLWN…RLALDEDEKI (242 aa)) is 3-hexulose-6-phosphate synthase.

It in the N-terminal section; belongs to the formaldehyde-activating enzyme family. The protein in the C-terminal section; belongs to the HPS/KGPDC family. HPS subfamily.

The enzyme catalyses 5,6,7,8-tetrahydromethanopterin + formaldehyde = 5,10-methylenetetrahydromethanopterin + H2O. It catalyses the reaction D-ribulose 5-phosphate + formaldehyde = D-arabino-hex-3-ulose 6-phosphate. It functions in the pathway carbohydrate biosynthesis; D-ribose 5-phosphate biosynthesis. Catalyzes the condensation of formaldehyde with tetrahydromethanopterin (H(4)MPT) to 5,10-methylenetetrahydromethanopterin. Functionally, catalyzes the reversible formation of ribulose-5-phosphate and formaldehyde from 3-hexulose-6-phosphate. The polypeptide is Bifunctional enzyme Fae/Hps (Methanosphaera stadtmanae (strain ATCC 43021 / DSM 3091 / JCM 11832 / MCB-3)).